Here is a 405-residue protein sequence, read N- to C-terminus: Argininosuccinate synthase (405 aa).

ATP contacts are provided by residues 10–18 (AYSGGLDTS) and alanine 37. L-citrulline is bound by residues tyrosine 88 and serine 93. Residue glycine 118 coordinates ATP. L-aspartate-binding residues include threonine 120, asparagine 124, and aspartate 125. Asparagine 124 contacts L-citrulline. Positions 128, 179, 188, 264, and 276 each coordinate L-citrulline.

The protein belongs to the argininosuccinate synthase family. Type 1 subfamily. In terms of assembly, homotetramer.

It localises to the cytoplasm. The enzyme catalyses L-citrulline + L-aspartate + ATP = 2-(N(omega)-L-arginino)succinate + AMP + diphosphate + H(+). It participates in amino-acid biosynthesis; L-arginine biosynthesis; L-arginine from L-ornithine and carbamoyl phosphate: step 2/3. The polypeptide is Argininosuccinate synthase (Pseudomonas savastanoi pv. phaseolicola (strain 1448A / Race 6) (Pseudomonas syringae pv. phaseolicola (strain 1448A / Race 6))).